Consider the following 415-residue polypeptide: Runt-related transcription factor 3 (415 aa).

Disordered stretches follow at residues 1-48, 176-266, and 375-415; these read MRIP…GGRA, GPRE…FPDP, and NLMN…WRPY. Positions 54–182 constitute a Runt domain; it reads SMVDVLADHA…TVDGPREPRR (129 aa). Basic and acidic residues predominate over residues 186–205; that stretch reads KLEDQTKPFPDRFGDLERLR. Residue K192 forms a Glycyl lysine isopeptide (Lys-Gly) (interchain with G-Cter in SUMO2) linkage. The span at 209 to 240 shows a compositional bias: polar residues; that stretch reads TPSTPSPRGSLSTTSHFSSQPQTPIQGTSELN. At S243 the chain carries Phosphoserine. A compositionally biased stretch (polar residues) spans 393-402; it reads SHSNSPTALS. Residues 406–415 are compositionally biased toward basic and acidic residues; sequence RMDEAVWRPY.

In terms of assembly, heterodimer with CBFB. RUNX3 binds DNA as a monomer and through the Runt domain. DNA-binding is increased by heterodimerization. Interacts with TLE1 and SUV39H1. The tyrosine phosphorylated form (via runt domain) interacts with SRC (via protein kinase domain). Interacts with FYN and LCK. Interacts with FOXP3. Interacts with ZFHX3. Interacts with TBX21. Phosphorylated on tyrosine residues by SRC. Phosphorylated by LCK and FYN. Expressed in gastric cancer tissues (at protein level).

The protein resides in the nucleus. It is found in the cytoplasm. In terms of biological role, forms the heterodimeric complex core-binding factor (CBF) with CBFB. RUNX members modulate the transcription of their target genes through recognizing the core consensus binding sequence 5'-TGTGGT-3', or very rarely, 5'-TGCGGT-3', within their regulatory regions via their runt domain, while CBFB is a non-DNA-binding regulatory subunit that allosterically enhances the sequence-specific DNA-binding capacity of RUNX. The heterodimers bind to the core site of a number of enhancers and promoters, including murine leukemia virus, polyomavirus enhancer, T-cell receptor enhancers, LCK, IL3 and GM-CSF promoters. May be involved in the control of cellular proliferation and/or differentiation. In association with ZFHX3, up-regulates CDKN1A promoter activity following TGF-beta stimulation. CBF complexes repress ZBTB7B transcription factor during cytotoxic (CD8+) T cell development. They bind to RUNX-binding sequence within the ZBTB7B locus acting as transcriptional silencer and allowing for cytotoxic T cell differentiation. CBF complexes binding to the transcriptional silencer is essential for recruitment of nuclear protein complexes that catalyze epigenetic modifications to establish epigenetic ZBTB7B silencing. Necessary for the development and survival of sensory neurons expressing parvalbumin. The sequence is that of Runt-related transcription factor 3 (RUNX3) from Homo sapiens (Human).